The sequence spans 208 residues: Small ribosomal subunit protein uS2 (208 aa).

The disordered stretch occupies residues 189-208; it reads KPDQDLPVPPEEFETKLVQS.

Belongs to the universal ribosomal protein uS2 family.

The sequence is that of Small ribosomal subunit protein uS2 (rps2) from Pyrobaculum aerophilum (strain ATCC 51768 / DSM 7523 / JCM 9630 / CIP 104966 / NBRC 100827 / IM2).